The following is a 292-amino-acid chain: Protease HtpX homolog (292 aa).

2 helical membrane passes run 4–24 (IFLF…TLRL) and 42–62 (ALLV…LAMS). Residue His147 coordinates Zn(2+). Glu148 is an active-site residue. His151 lines the Zn(2+) pocket. 2 helical membrane-spanning segments follow: residues 158 to 178 (VTLA…SRII) and 198 to 218 (FVTS…IVMW). Glu224 provides a ligand contact to Zn(2+).

The protein belongs to the peptidase M48B family. Zn(2+) is required as a cofactor.

It is found in the cell inner membrane. This chain is Protease HtpX homolog, found in Nitrosomonas eutropha (strain DSM 101675 / C91 / Nm57).